The following is a 115-amino-acid chain: Large ribosomal subunit protein bL20 (115 aa).

The protein belongs to the bacterial ribosomal protein bL20 family.

Binds directly to 23S ribosomal RNA and is necessary for the in vitro assembly process of the 50S ribosomal subunit. It is not involved in the protein synthesizing functions of that subunit. The protein is Large ribosomal subunit protein bL20 of Prochlorococcus marinus subsp. pastoris (strain CCMP1986 / NIES-2087 / MED4).